The chain runs to 277 residues: MTTTVAVVGATGRMGQLISQIVEASTEFELVASLDSKDELSDMLGADIAVDVTLPAVSQGVVEYAVAHGMNVLVGTSGWTGERITELERRITGKLAVGVVIIPNFSVGSVLATSFAQMAARFYDSIEIVEAHGASKIDSPSGTAVRTAELMSQARGARGPVQAPHTDQRARGQQVASIPVHSLRMQGVVAKQDVVFGGNGEVLTISHDTLAPSAYEAGILLALRATRTARGVVVGLDRLIDLDGSRERAAQAAAGDAPSGPVDDGGPSGQAATVTSA.

9-14 (GATGRM) contacts NAD(+). NADP(+) is bound at residue Lys-37. Residue 75–77 (GTS) participates in NAD(+) binding. Catalysis depends on His-132, which acts as the Proton donor/acceptor. The Proton donor role is filled by Lys-136. 142–143 (GT) contributes to the (S)-2,3,4,5-tetrahydrodipicolinate binding site. 2 disordered regions span residues 154–173 (ARGA…ARGQ) and 247–277 (ERAA…VTSA). The span at 250-265 (AQAAAGDAPSGPVDDG) shows a compositional bias: low complexity.

The protein belongs to the DapB family.

The protein localises to the cytoplasm. The catalysed reaction is (S)-2,3,4,5-tetrahydrodipicolinate + NAD(+) + H2O = (2S,4S)-4-hydroxy-2,3,4,5-tetrahydrodipicolinate + NADH + H(+). It carries out the reaction (S)-2,3,4,5-tetrahydrodipicolinate + NADP(+) + H2O = (2S,4S)-4-hydroxy-2,3,4,5-tetrahydrodipicolinate + NADPH + H(+). It participates in amino-acid biosynthesis; L-lysine biosynthesis via DAP pathway; (S)-tetrahydrodipicolinate from L-aspartate: step 4/4. Catalyzes the conversion of 4-hydroxy-tetrahydrodipicolinate (HTPA) to tetrahydrodipicolinate. The chain is 4-hydroxy-tetrahydrodipicolinate reductase from Clavibacter michiganensis subsp. michiganensis (strain NCPPB 382).